A 521-amino-acid chain; its full sequence is MTAPHTSANDRVIIFDTTLRDGEQCPGATMTFEEKLEVASLLDSMGVDVIEAGFPIASDGDFEAVHEIAKRAKNAVICGLSRAGAKDIDRCAEAIKPAKQGRIHTFLSTSPVHMKYKLQMDAAQVYELVISSVTRARNHTDNVEWSSEDGTRTEFDFLCKCVEAAIKAGASTINIPDTVGYSVPEEYYDLFKRVRENVPNSDKAIFSVHCHDDLGMAVANSLAGIRGGARQIECTVNGIGERAGNTALEEVVMAMKVRNDKLPYWNKIDTTMLTRASKVVSAATSFPVQYNKAIVGRNAFAHESGIHQDGMLKNAETYEIMLPESVGVKQTSLVMGKHSGRHAFIHKLEEMGYKLGQNQLEDAFVRFKALADRKKDIYDEDIEALVDLEIAQSHDRIKLVSLTVIAGTHGPQRATMKLDVDGQTKIEEAEGNGPVDAVFNCIKALVPHVAKLELYQVHAVTEGTDAQAEVSVRLSHEGRSVTSRASDPDTLVASAKAYLGALNKIVMKRQRDMAAPAAAAS.

The region spanning 12–274 is the Pyruvate carboxyltransferase domain; it reads VIIFDTTLRD…WNKIDTTMLT (263 aa). Positions 21, 209, 211, and 245 each coordinate Mn(2+). The regulatory domain stretch occupies residues 398–521; the sequence is KLVSLTVIAG…DMAAPAAAAS (124 aa).

It belongs to the alpha-IPM synthase/homocitrate synthase family. LeuA type 1 subfamily. Homodimer. The cofactor is Mn(2+).

It localises to the cytoplasm. The enzyme catalyses 3-methyl-2-oxobutanoate + acetyl-CoA + H2O = (2S)-2-isopropylmalate + CoA + H(+). The protein operates within amino-acid biosynthesis; L-leucine biosynthesis; L-leucine from 3-methyl-2-oxobutanoate: step 1/4. Its function is as follows. Catalyzes the condensation of the acetyl group of acetyl-CoA with 3-methyl-2-oxobutanoate (2-ketoisovalerate) to form 3-carboxy-3-hydroxy-4-methylpentanoate (2-isopropylmalate). The sequence is that of 2-isopropylmalate synthase from Rhodopseudomonas palustris (strain BisA53).